The following is a 327-amino-acid chain: MHTPYLLGALAALAATAVGAPAEHIKKRESRTSAPSGCLTVGSDGTYSTIGDALDALGSSTSSACIYVASGTYEEQLTIDYAGNLTLYGETTDTSTYKDNVVTITHTISSSDAGSLDKSATVNVVSDGFSMYNINVENGYGEGAQAVALVGNADQLGFYGCQFSGYQDTLYVKAGTQYYSNCMIEGAVDYIFGDASVWFGECDIVSNGAGAITASSRETSSDSGWYAIDNCNIKAASGVSLTEEVYLGRPWRVLARVIYQNSVLSDIINPKGWTTMADGATPLYYEYNNSGAGSDTSDREYETSISAAVDKTTVLGETWGDWIDRSY.

The first 19 residues, 1–19, serve as a signal peptide directing secretion; the sequence is MHTPYLLGALAALAATAVG. Asn84 carries N-linked (GlcNAc...) asparagine glycosylation. Gln145 serves as a coordination point for substrate. Residue Asp168 is the Proton donor of the active site. Residue Asp189 is the Nucleophile of the active site. The substrate site is built by Arg249 and Trp251. N-linked (GlcNAc...) asparagine glycosylation is present at Asn288.

It belongs to the pectinesterase family.

The protein resides in the secreted. It carries out the reaction [(1-&gt;4)-alpha-D-galacturonosyl methyl ester](n) + n H2O = [(1-&gt;4)-alpha-D-galacturonosyl](n) + n methanol + n H(+). It functions in the pathway glycan metabolism; pectin degradation; 2-dehydro-3-deoxy-D-gluconate from pectin: step 1/5. Involved in maceration and soft-rotting of plant tissue. This chain is Probable pectinesterase A (pmeA), found in Aspergillus niger (strain ATCC MYA-4892 / CBS 513.88 / FGSC A1513).